The sequence spans 153 residues: Small ribosomal subunit protein uS13 (153 aa).

The interval 134-153 is disordered; the sequence is GQRTKSNGRRGRSMGVSRKK.

This sequence belongs to the universal ribosomal protein uS13 family.

The protein resides in the cytoplasm. In terms of biological role, located at the top of the head of the 40S subunit, it contacts several helices of the 18S rRNA. The polypeptide is Small ribosomal subunit protein uS13 (RPS18) (Encephalitozoon cuniculi (strain GB-M1) (Microsporidian parasite)).